The chain runs to 1325 residues: Cellulose synthase 1 operon protein C (1325 aa).

The first 30 residues, 1 to 30 (MNRRYVFSLSAGLLASSCMGAIMPVPVARA), serve as a signal peptide directing secretion. TPR repeat units follow at residues 50 to 83 (RQIL…APDA), 85 to 117 (DVLE…APGS), 292 to 325 (AGLA…NSHD), 326 to 359 (ADSL…DPKT), 406 to 439 (TGAT…DPNN), 558 to 591 (NDAA…KEDL), 702 to 735 (MGIA…DPEA), and 737 to 769 (SPKL…NPQD). Residues 838–886 (VEGSRSASGPAATEEDALAPPSSNPFRHHGYGRQTELGAPVTGGSYSME) are disordered.

This sequence belongs to the AcsC/BcsC family.

The protein resides in the cell outer membrane. The protein operates within glycan metabolism; bacterial cellulose biosynthesis. Required for maximal bacterial cellulose synthesis. It may be involved in the formation of a membrane complex for extrusion of the cellulose product. The sequence is that of Cellulose synthase 1 operon protein C (bcsCI) from Komagataeibacter xylinus (Gluconacetobacter xylinus).